A 440-amino-acid polypeptide reads, in one-letter code: Integral membrane protein GPR180 (440 aa).

A signal peptide spans 1–22; sequence MGGLRLLAVALTCCWWPQGSQG. N-linked (GlcNAc...) asparagine glycans are attached at residues Asn105 and Asn110. 7 consecutive transmembrane segments (helical) span residues 173–193, 202–222, 249–269, 284–304, 321–341, 360–380, and 389–409; these read FFFL…QSLW, MHMI…SALA, IASQ…WTIV, TPAS…LLLW, LAGI…GCGL, FAKG…ISVI, and VITI…YRLF.

Its subcellular location is the membrane. The chain is Integral membrane protein GPR180 (GPR180) from Homo sapiens (Human).